The following is a 189-amino-acid chain: Elongation factor P (189 aa).

The residue at position 34 (Lys34) is an N6-(3,6-diaminohexanoyl)-5-hydroxylysine.

Belongs to the elongation factor P family. May be beta-lysylated on the epsilon-amino group of Lys-34 by the combined action of EpmA and EpmB, and then hydroxylated on the C5 position of the same residue by EpmC (if this protein is present). Lysylation is critical for the stimulatory effect of EF-P on peptide-bond formation. The lysylation moiety may extend toward the peptidyltransferase center and stabilize the terminal 3-CCA end of the tRNA. Hydroxylation of the C5 position on Lys-34 may allow additional potential stabilizing hydrogen-bond interactions with the P-tRNA.

The protein resides in the cytoplasm. Its pathway is protein biosynthesis; polypeptide chain elongation. Involved in peptide bond synthesis. Alleviates ribosome stalling that occurs when 3 or more consecutive Pro residues or the sequence PPG is present in a protein, possibly by augmenting the peptidyl transferase activity of the ribosome. Modification of Lys-34 is required for alleviation. The chain is Elongation factor P from Buchnera aphidicola subsp. Baizongia pistaciae (strain Bp).